Here is a 197-residue protein sequence, read N- to C-terminus: Imidazoleglycerol-phosphate dehydratase (197 aa).

The protein belongs to the imidazoleglycerol-phosphate dehydratase family.

Its subcellular location is the cytoplasm. The catalysed reaction is D-erythro-1-(imidazol-4-yl)glycerol 3-phosphate = 3-(imidazol-4-yl)-2-oxopropyl phosphate + H2O. The protein operates within amino-acid biosynthesis; L-histidine biosynthesis; L-histidine from 5-phospho-alpha-D-ribose 1-diphosphate: step 6/9. The chain is Imidazoleglycerol-phosphate dehydratase from Syntrophobacter fumaroxidans (strain DSM 10017 / MPOB).